The primary structure comprises 152 residues: Xanthine-guanine phosphoribosyltransferase (152 aa).

Residues 37-38, arginine 69, and 88-96 contribute to the 5-phospho-alpha-D-ribose 1-diphosphate site; these read RG and DDLVDTGGT. GMP is bound at residue arginine 69. Aspartate 89 is a Mg(2+) binding site. Positions 92 and 135 each coordinate guanine. Residues aspartate 92 and isoleucine 135 each contribute to the xanthine site. GMP-binding positions include 92 to 96 and 134 to 135; these read DTGGT and WI.

This sequence belongs to the purine/pyrimidine phosphoribosyltransferase family. XGPT subfamily. Homotetramer. The cofactor is Mg(2+).

It is found in the cell inner membrane. It catalyses the reaction GMP + diphosphate = guanine + 5-phospho-alpha-D-ribose 1-diphosphate. It carries out the reaction XMP + diphosphate = xanthine + 5-phospho-alpha-D-ribose 1-diphosphate. The enzyme catalyses IMP + diphosphate = hypoxanthine + 5-phospho-alpha-D-ribose 1-diphosphate. The protein operates within purine metabolism; GMP biosynthesis via salvage pathway; GMP from guanine: step 1/1. It participates in purine metabolism; XMP biosynthesis via salvage pathway; XMP from xanthine: step 1/1. Its function is as follows. Purine salvage pathway enzyme that catalyzes the transfer of the ribosyl-5-phosphate group from 5-phospho-alpha-D-ribose 1-diphosphate (PRPP) to the N9 position of the 6-oxopurines guanine and xanthine to form the corresponding ribonucleotides GMP (guanosine 5'-monophosphate) and XMP (xanthosine 5'-monophosphate), with the release of PPi. To a lesser extent, also acts on hypoxanthine. This Yersinia pseudotuberculosis serotype O:1b (strain IP 31758) protein is Xanthine-guanine phosphoribosyltransferase.